The sequence spans 874 residues: Oxysterol-binding protein-related protein 5 (874 aa).

A disordered region spans residues 1-71 (MKEEAFLRRR…PQTPGSATKV (71 aa)). S12 is modified (phosphoserine). Residues 93 to 123 (VSKKDALKAQKENYRQEKKRATKQLFSALTD) are a coiled coil. Positions 126–243 (VVIMADSLKI…WLDALELALR (118 aa)) constitute a PH domain. 2 disordered regions span residues 255–277 (QGRD…GLPT) and 299–338 (FSDK…GPWR). Positions 261-277 (QGSSPDASPSSLYGLPT) are enriched in polar residues. Residues 299–308 (FSDKSERENA) are compositionally biased toward basic and acidic residues. Residues 383–388 (LSRVVL), 445–448 (KPYN), and 477–478 (HH) contribute to the a 1,2-diacyl-sn-glycero-3-phospho-(1D-myo-inositol 4-phosphate) site. A 1,2-diacyl-sn-glycero-3-phospho-L-serine-binding positions include 383 to 388 (LSRVVL) and N448. Residue S503 participates in a 1,2-diacyl-sn-glycero-3-phospho-L-serine binding. A compositionally biased stretch (basic and acidic residues) spans 660-684 (GDQHKATQEKSVLEEAQRQRAREHQ). Disordered regions lie at residues 660 to 685 (GDQH…EHQQ) and 739 to 798 (GQTT…GGES). K669, E673, and R677 together coordinate a 1,2-diacyl-sn-glycero-3-phospho-(1D-myo-inositol 4-phosphate). Residues S746 and S749 each carry the phosphoserine modification. Positions 754–764 (PSSDRRLRKAS) are enriched in basic and acidic residues. The span at 765 to 782 (DQPSGHSQVTESSGSTPE) shows a compositional bias: polar residues. A helical transmembrane segment spans residues 855–873 (SWFLLCIFLTCQLFINYIL).

It belongs to the OSBP family.

It is found in the endoplasmic reticulum membrane. Functionally, lipid transporter involved in lipid countertransport between the endoplasmic reticulum and the plasma membrane: specifically exchanges phosphatidylserine with phosphatidylinositol 4-phosphate (PI4P), delivering phosphatidylserine to the plasma membrane in exchange for PI4P, which is degraded by the SAC1/SACM1L phosphatase in the endoplasmic reticulum. Binds phosphatidylserine and PI4P in a mutually exclusive manner. May cooperate with NPC1 to mediate the exit of cholesterol from endosomes/lysosomes. Binds 25-hydroxycholesterol and cholesterol. This is Oxysterol-binding protein-related protein 5 (Osbpl5) from Mus musculus (Mouse).